The primary structure comprises 247 residues: ATP synthase subunit a, chloroplastic (247 aa).

Helical transmembrane passes span 28-48 (GQVL…CLLG), 95-115 (VPFL…GALI), 134-154 (INTT…AGIS), 199-219 (LVVG…IMLL), and 220-240 (GLFT…AYIG).

It belongs to the ATPase A chain family. As to quaternary structure, F-type ATPases have 2 components, CF(1) - the catalytic core - and CF(0) - the membrane proton channel. CF(1) has five subunits: alpha(3), beta(3), gamma(1), delta(1), epsilon(1). CF(0) has four main subunits: a, b, b' and c.

Its subcellular location is the plastid. The protein resides in the chloroplast thylakoid membrane. Key component of the proton channel; it plays a direct role in the translocation of protons across the membrane. This Chlorella vulgaris (Green alga) protein is ATP synthase subunit a, chloroplastic.